Here is a 209-residue protein sequence, read N- to C-terminus: Large ribosomal subunit protein uL4 (209 aa).

Positions threonine 47 to alanine 72 are disordered. A compositionally biased stretch (basic residues) spans serine 59–alanine 72.

It belongs to the universal ribosomal protein uL4 family. As to quaternary structure, part of the 50S ribosomal subunit.

Its function is as follows. One of the primary rRNA binding proteins, this protein initially binds near the 5'-end of the 23S rRNA. It is important during the early stages of 50S assembly. It makes multiple contacts with different domains of the 23S rRNA in the assembled 50S subunit and ribosome. In terms of biological role, forms part of the polypeptide exit tunnel. This chain is Large ribosomal subunit protein uL4, found in Borreliella burgdorferi (strain ZS7) (Borrelia burgdorferi).